A 289-amino-acid chain; its full sequence is MKLCGFEVGLDKPFFLIAGPCVIESEQMALDTAGELKAITTELGIPFIYKSSFDKANRSSGKSFRGLGMEKGLEILAHVKREIGVPVLTDIHEIDEIKPVAAVVDVLQTPAFLCRQTDFIRACAQSGKPVNIKKGQFLAPHDMKNVIDKARDAAREAGLPDDVFMACERGVSFGYNNLVSDMRSLAIMRETGAPVVFDATHSVQLPGGQGTSSGGQREFVPVLSRAAVATGVAGLFMETHPDPSKAMSDGPNAVPLSRMKELLTVLKELDTLVKRAGFLEDNFGWPACA.

This sequence belongs to the KdsA family.

Its subcellular location is the cytoplasm. It catalyses the reaction D-arabinose 5-phosphate + phosphoenolpyruvate + H2O = 3-deoxy-alpha-D-manno-2-octulosonate-8-phosphate + phosphate. The protein operates within carbohydrate biosynthesis; 3-deoxy-D-manno-octulosonate biosynthesis; 3-deoxy-D-manno-octulosonate from D-ribulose 5-phosphate: step 2/3. Its pathway is bacterial outer membrane biogenesis; lipopolysaccharide biosynthesis. This chain is 2-dehydro-3-deoxyphosphooctonate aldolase, found in Cupriavidus taiwanensis (strain DSM 17343 / BCRC 17206 / CCUG 44338 / CIP 107171 / LMG 19424 / R1) (Ralstonia taiwanensis (strain LMG 19424)).